The chain runs to 479 residues: Anaerobic nitric oxide reductase flavorubredoxin (479 aa).

Residues 30-210 (LRGSSYNSYL…PFSRLVTPKI (181 aa)) are zinc metallo-hydrolase. The Fe cation site is built by histidine 79, glutamate 81, aspartate 83, histidine 147, aspartate 166, and histidine 227. The Flavodoxin-like domain occupies 254 to 393 (ITIFYDTMSN…LCREHGREIA (140 aa)). Residues 260–264 (TMSNN) and 342–369 (AFGS…EMSL) each bind FMN. The Rubredoxin-like domain maps to 423–474 (GPRMQCSVCQWIYDPAKGEPMQDVAPGTPWSEVPDNFLCPECSLGKDVFDEL). Residues cysteine 428, cysteine 431, cysteine 461, and cysteine 464 each contribute to the Fe cation site.

This sequence in the N-terminal section; belongs to the zinc metallo-hydrolase group 3 family. Homotetramer. Fe cation serves as cofactor. Requires FMN as cofactor.

It localises to the cytoplasm. It participates in nitrogen metabolism; nitric oxide reduction. Its function is as follows. Anaerobic nitric oxide reductase; uses NADH to detoxify nitric oxide (NO), protecting several 4Fe-4S NO-sensitive enzymes. Has at least 2 reductase partners, only one of which (NorW, flavorubredoxin reductase) has been identified. NO probably binds to the di-iron center; electrons enter from the NorW at rubredoxin and are transferred sequentially to the FMN center and the di-iron center. Also able to function as an aerobic oxygen reductase. The chain is Anaerobic nitric oxide reductase flavorubredoxin from Shigella sonnei (strain Ss046).